The sequence spans 107 residues: UPF0145 protein PM1668 (107 aa).

This sequence belongs to the UPF0145 family.

The chain is UPF0145 protein PM1668 from Pasteurella multocida (strain Pm70).